The primary structure comprises 293 residues: Bifunctional protein FolD (293 aa).

NADP(+) is bound by residues G162–S164 and I227.

Belongs to the tetrahydrofolate dehydrogenase/cyclohydrolase family. Homodimer.

It catalyses the reaction (6R)-5,10-methylene-5,6,7,8-tetrahydrofolate + NADP(+) = (6R)-5,10-methenyltetrahydrofolate + NADPH. The enzyme catalyses (6R)-5,10-methenyltetrahydrofolate + H2O = (6R)-10-formyltetrahydrofolate + H(+). It functions in the pathway one-carbon metabolism; tetrahydrofolate interconversion. Functionally, catalyzes the oxidation of 5,10-methylenetetrahydrofolate to 5,10-methenyltetrahydrofolate and then the hydrolysis of 5,10-methenyltetrahydrofolate to 10-formyltetrahydrofolate. The protein is Bifunctional protein FolD of Metamycoplasma arthritidis (strain 158L3-1) (Mycoplasma arthritidis).